A 357-amino-acid chain; its full sequence is D-amino-acid oxidase (357 aa).

FAD-binding residues include Ala-13, Gly-14, Ser-42, Gly-47, Arg-289, Gly-315, and Gly-318. Arg-289 provides a ligand contact to D-proline. Arg-289 is a binding site for D-serine.

This sequence belongs to the DAMOX/DASOX family. It depends on FAD as a cofactor.

The protein resides in the cytoplasm. The protein localises to the secreted. It localises to the cell wall. It catalyses the reaction a D-alpha-amino acid + O2 + H2O = a 2-oxocarboxylate + H2O2 + NH4(+). The enzyme catalyses D-phenylalanine + O2 + H2O = 3-phenylpyruvate + H2O2 + NH4(+). The catalysed reaction is D-lysine + O2 + H2O = 6-amino-2-oxohexanoate + H2O2 + NH4(+). It carries out the reaction D-methionine + O2 + H2O = 4-methylsulfanyl-2-oxobutanoate + H2O2 + NH4(+). It catalyses the reaction D-arginine + O2 + H2O = 5-guanidino-2-oxopentanoate + H2O2 + NH4(+). The enzyme catalyses D-ornithine + O2 + H2O = 5-amino-2-oxopentanoate + H2O2 + NH4(+). The catalysed reaction is D-leucine + O2 + H2O = 4-methyl-2-oxopentanoate + H2O2 + NH4(+). It carries out the reaction D-histidine + O2 + H2O = 3-(imidazol-5-yl)pyruvate + H2O2 + NH4(+). With respect to regulation, activated by manganese, copper, and iron ions. Inhibited by barium, aluminum, and zinc ions. Its function is as follows. Catalyzes the oxidative deamination of D-amino acids with broad substrate specificity. The polypeptide is D-amino-acid oxidase (Unknown prokaryotic organism).